A 320-amino-acid polypeptide reads, in one-letter code: Olfactory receptor 5C1 (320 aa).

Over 1 to 29 the chain is Extracellular; it reads MNSENLTRAAVAPAEFVLLGITNRWDLRV. Asn5 carries an N-linked (GlcNAc...) asparagine glycan. A helical transmembrane segment spans residues 30–50; that stretch reads ALFLTCLPVYLVSLLGNMGMA. Topologically, residues 51–58 are cytoplasmic; it reads LLIRMDAR. The helical transmembrane segment at 59–79 threads the bilayer; that stretch reads LHTPMYFFLANLSLLDACYSS. The Extracellular portion of the chain corresponds to 80-103; sequence AIGPKMLVDLLLPRATIPYTACAL. The cysteines at positions 101 and 193 are disulfide-linked. Residues 104-124 traverse the membrane as a helical segment; sequence QMFVFAGLADTECCLLAAMAY. The Cytoplasmic segment spans residues 125 to 143; it reads DRYVAIRNPLLYTTAMSQR. The helical transmembrane segment at 144–164 threads the bilayer; sequence LCLALLGASGLGGAVSAFVHT. Topologically, residues 165–200 are extracellular; the sequence is TLTFRLSFCRSRKINSFFCDIPPLLAISCSDTSLNE. The helical transmembrane segment at 201 to 221 threads the bilayer; the sequence is LLLFAICGFIQTATVLAITVS. Over 222 to 241 the chain is Cytoplasmic; the sequence is YGFIAGAVIHMRSVEGSRRA. A helical transmembrane segment spans residues 242–262; that stretch reads ASTGGSHLTAVAMMYGTLIFM. Residues 263–275 lie on the Extracellular side of the membrane; sequence YLRPSSSYALDTD. Residues 276-296 traverse the membrane as a helical segment; that stretch reads KMASVFYTLVIPSLNPLIYSL. Over 297–320 the chain is Cytoplasmic; that stretch reads RNKEVKEALRQTWSRFHCPGQGSQ.

Belongs to the G-protein coupled receptor 1 family.

The protein resides in the cell membrane. Functionally, odorant receptor. This Homo sapiens (Human) protein is Olfactory receptor 5C1 (OR5C1).